The sequence spans 343 residues: ATP-dependent (S)-NAD(P)H-hydrate dehydratase (343 aa).

The N-terminal 42 residues, 1 to 42 (MAVCPYGAAAVVMALLSAAIAFHCSPLLAVLQRALSLHTAHA), are a transit peptide targeting the mitochondrion. The YjeF C-terminal domain maps to 49–340 (LFQLVRNIVP…AEVGAAFSKL (292 aa)). N6-acetyllysine is present on K63. Phosphotyrosine is present on Y81. (6S)-NADPHX contacts are provided by residues G149 and 202 to 208 (NHVEFSR). ATP contacts are provided by residues 242 to 246 (KGEQD) and 261 to 270 (GSSRRCGGQG). D271 contributes to the (6S)-NADPHX binding site.

Belongs to the NnrD/CARKD family. Mg(2+) serves as cofactor.

The protein resides in the mitochondrion. The enzyme catalyses (6S)-NADHX + ATP = ADP + phosphate + NADH + H(+). The catalysed reaction is (6S)-NADPHX + ATP = ADP + phosphate + NADPH + H(+). Its function is as follows. Catalyzes the dehydration of the S-form of NAD(P)HX at the expense of ATP, which is converted to ADP. Together with NAD(P)HX epimerase, which catalyzes the epimerization of the S- and R-forms, the enzyme allows the repair of both epimers of NAD(P)HX, a damaged form of NAD(P)H that is a result of enzymatic or heat-dependent hydration. The polypeptide is ATP-dependent (S)-NAD(P)H-hydrate dehydratase (Rattus norvegicus (Rat)).